We begin with the raw amino-acid sequence, 679 residues long: Sodium-dependent phosphate transporter 1 (679 aa).

Transmembrane regions (helical) follow at residues 21 to 41, 62 to 82, 100 to 120, 158 to 178, 203 to 223, and 230 to 250; these read YLWM…SVGA, ACIL…AKVS, GLLM…QLVA, IVMS…ILFF, ACTV…LLGF, and GTIL…WFFV. Residues Ser265 and Ser269 each carry the phosphoserine modification. 4 helical membrane-spanning segments follow: residues 511 to 531, 558 to 578, 600 to 620, and 650 to 670; these read VSLL…FAHG, VATP…GLWV, FSIE…GLPI, and IFMA…AIMA. An a region spans residues 550–558; sequence DTGDVSSKV.

Belongs to the inorganic phosphate transporter (PiT) (TC 2.A.20) family. In terms of tissue distribution, ubiquitously expressed.

The protein resides in the cell membrane. It carries out the reaction 2 Na(+)(out) + phosphate(out) = 2 Na(+)(in) + phosphate(in). Sodium-phosphate symporter which preferentially transports the monovalent form of phosphate with a stoichiometry of two sodium ions per phosphate ion. May play a role in extracellular matrix and cartilage calcification as well as in vascular calcification. Essential for cell proliferation but this function is independent of its phosphate transporter activity. Its function is as follows. (Microbial infection) May function as a retroviral receptor as it confers human cells susceptibility to infection to Gibbon Ape Leukemia Virus (GaLV), Simian sarcoma-associated virus (SSAV) and Feline leukemia virus subgroup B (FeLV-B) as well as 10A1 murine leukemia virus (10A1 MLV). This is Sodium-dependent phosphate transporter 1 (SLC20A1) from Homo sapiens (Human).